We begin with the raw amino-acid sequence, 171 residues long: Large ribosomal subunit protein bL9 (171 aa).

This sequence belongs to the bacterial ribosomal protein bL9 family.

In terms of biological role, binds to the 23S rRNA. This is Large ribosomal subunit protein bL9 from Rickettsia conorii (strain ATCC VR-613 / Malish 7).